The chain runs to 840 residues: Protein translocase subunit SecA (840 aa).

ATP is bound by residues Gln-85, 103 to 107 (GEGKT), and Asp-492. Residues 787-821 (QRERVAKETGASHGGDSQEIKKKPVKKEPKVGRND) form a disordered region. Positions 802 to 819 (DSQEIKKKPVKKEPKVGR) are enriched in basic and acidic residues. 4 residues coordinate Zn(2+): Cys-823, Cys-825, Cys-834, and Cys-835.

It belongs to the SecA family. In terms of assembly, monomer and homodimer. Part of the essential Sec protein translocation apparatus which comprises SecA, SecYEG and auxiliary proteins SecDF. Other proteins may also be involved. Zn(2+) is required as a cofactor.

It is found in the cell membrane. It localises to the cytoplasm. The enzyme catalyses ATP + H2O + cellular proteinSide 1 = ADP + phosphate + cellular proteinSide 2.. Its function is as follows. Part of the Sec protein translocase complex. Interacts with the SecYEG preprotein conducting channel. Has a central role in coupling the hydrolysis of ATP to the transfer of proteins into and across the cell membrane, serving as an ATP-driven molecular motor driving the stepwise translocation of polypeptide chains across the membrane. The chain is Protein translocase subunit SecA from Clostridium perfringens (strain SM101 / Type A).